We begin with the raw amino-acid sequence, 770 residues long: tRNA(Met) cytidine acetyltransferase TmcA 2 (770 aa).

Residues Gln-209 and Arg-390 each coordinate ATP. Residues 458 to 608 enclose the N-acetyltransferase domain; the sequence is MIMLDGIHHK…YPVVVIRPIS (151 aa). 533-535 contributes to the acetyl-CoA binding site; sequence IAV.

The protein belongs to the TmcA family.

The protein localises to the cytoplasm. The catalysed reaction is cytidine(34) in elongator tRNA(Met) + acetyl-CoA + ATP + H2O = N(4)-acetylcytidine(34) in elongator tRNA(Met) + ADP + phosphate + CoA + H(+). It catalyses the reaction a cytidine in RNA + acetyl-CoA + ATP + H2O = an N(4)-acetylcytidine in RNA + ADP + phosphate + CoA + H(+). The enzyme catalyses a cytidine in tRNA + acetyl-CoA + ATP + H2O = an N(4)-acetylcytidine in tRNA + ADP + phosphate + CoA + H(+). It carries out the reaction a cytidine in mRNA + acetyl-CoA + ATP + H2O = an N(4)-acetylcytidine in mRNA + ADP + phosphate + CoA + H(+). In terms of biological role, catalyzes the formation of N(4)-acetylcytidine (ac(4)C) at the wobble position of tRNA(Met), by using acetyl-CoA as an acetyl donor and ATP (or GTP). Catalyzes the formation of 41 N(4)-acetylcytidine (ac(4)C) sites in RNA, almost always on the middle C of a CCG motif. Modifications are found mostly in tRNA, with small amounts found in rRNA and mRNA. The polypeptide is tRNA(Met) cytidine acetyltransferase TmcA 2 (Saccharolobus solfataricus (strain ATCC 35092 / DSM 1617 / JCM 11322 / P2) (Sulfolobus solfataricus)).